The following is a 178-amino-acid chain: ATP synthase subunit delta (178 aa).

It belongs to the ATPase delta chain family. In terms of assembly, F-type ATPases have 2 components, F(1) - the catalytic core - and F(0) - the membrane proton channel. F(1) has five subunits: alpha(3), beta(3), gamma(1), delta(1), epsilon(1). F(0) has three main subunits: a(1), b(2) and c(10-14). The alpha and beta chains form an alternating ring which encloses part of the gamma chain. F(1) is attached to F(0) by a central stalk formed by the gamma and epsilon chains, while a peripheral stalk is formed by the delta and b chains.

Its subcellular location is the cell membrane. Functionally, f(1)F(0) ATP synthase produces ATP from ADP in the presence of a proton or sodium gradient. F-type ATPases consist of two structural domains, F(1) containing the extramembraneous catalytic core and F(0) containing the membrane proton channel, linked together by a central stalk and a peripheral stalk. During catalysis, ATP synthesis in the catalytic domain of F(1) is coupled via a rotary mechanism of the central stalk subunits to proton translocation. Its function is as follows. This protein is part of the stalk that links CF(0) to CF(1). It either transmits conformational changes from CF(0) to CF(1) or is implicated in proton conduction. The protein is ATP synthase subunit delta of Streptococcus pneumoniae (strain CGSP14).